The primary structure comprises 410 residues: Putative odorant receptor 65c (410 aa).

Over 1 to 59 (MDIRGNVHRFVKFYIDGWKHFRDPTMESSYSAVYYWREQMKAMFLYTTSKERQMPYRSS) the chain is Cytoplasmic. A helical transmembrane segment spans residues 60 to 80 (WHTLVIIQATVCFLTMCYGVT). The Extracellular portion of the chain corresponds to 81–92 (ESLGDKVQMGRD). A helical transmembrane segment spans residues 93–113 (IAFIIGFFYIAFKIYYFQWYG). The Cytoplasmic portion of the chain corresponds to 114-148 (DELDEVVEALETFHPWAQKGPGAVDYRTAKRWYFT). The chain crosses the membrane as a helical span at residues 149 to 169 (LAFFLASSWLVFLCIFILLLI). The Extracellular portion of the chain corresponds to 170–222 (TSPLWVHQQILPLHAAFPFQWHEKSIHPISHAFIYLFQTWNVMYFLTWLVCIE). The helical transmembrane segment at 223-243 (GLSVSIYVEITFAIEVLCLEL) threads the bilayer. The Cytoplasmic portion of the chain corresponds to 244–279 (RHLHQRCHGYEQLRLETNRLVQFHQKIVHILDHTNK). A helical transmembrane segment spans residues 280–300 (VFHGTLIMQMGVNFFLVSLSV). At 301–312 (LEAMEARKDPKV) the chain is on the extracellular side. A helical membrane pass occupies residues 313 to 333 (VAQFAVLMLLALGHLSMWSYF). The Cytoplasmic segment spans residues 334–385 (GDLLSQKSLTISEAAYEAYDPIKGSKDVYRDLCLIIRRGQEPLIMRASPFPS). A helical membrane pass occupies residues 386–406 (FNFINYSAILNQCYGILTFLL). Residues 407 to 410 (KTLD) lie on the Extracellular side of the membrane.

This sequence belongs to the insect chemoreceptor superfamily. Heteromeric odorant receptor channel (TC 1.A.69) family. Or49a subfamily. Interacts with Orco. Complexes exist early in the endomembrane system in olfactory sensory neurons (OSNs), coupling these complexes to the conserved ciliary trafficking pathway.

It localises to the cell membrane. In terms of biological role, odorant receptor which mediates acceptance or avoidance behavior, depending on its substrates. The odorant receptor repertoire encodes a large collection of odor stimuli that vary widely in identity, intensity, and duration. May form a complex with Orco to form odorant-sensing units, providing sensitive and prolonged odorant signaling and calcium permeability. This is Putative odorant receptor 65c (Or65c) from Drosophila melanogaster (Fruit fly).